A 216-amino-acid polypeptide reads, in one-letter code: Ras-related protein RABA1a (216 aa).

20-27 is a GTP binding site; sequence GDSGVGKS. Residues 42–50 carry the Effector region motif; that stretch reads SKSTIGVEF. GTP-binding positions include 68–72, 126–129, and 156–157; these read DTAGQ, NKCD, and SA. Residues Cys213 and Cys214 are each lipidated (S-geranylgeranyl cysteine).

It belongs to the small GTPase superfamily. Rab family.

It localises to the cell membrane. Involved in auxin-mediated response. May be involved in vesicle trafficking of components involved in polar auxin transport. Binds GTP and GDP and possesses intrinsic GTPase activity. The sequence is that of Ras-related protein RABA1a (RABA1A) from Arabidopsis thaliana (Mouse-ear cress).